We begin with the raw amino-acid sequence, 201 residues long: Recombination protein RecR (201 aa).

A C4-type zinc finger spans residues 57–72 (CADCRTFTEQEVCNIC). A Toprim domain is found at 81-176 (GQICVVESPA…EASRIAHGVP (96 aa)).

The protein belongs to the RecR family.

Functionally, may play a role in DNA repair. It seems to be involved in an RecBC-independent recombinational process of DNA repair. It may act with RecF and RecO. This is Recombination protein RecR from Salmonella arizonae (strain ATCC BAA-731 / CDC346-86 / RSK2980).